Here is a 513-residue protein sequence, read N- to C-terminus: Maturase K (513 aa).

The protein belongs to the intron maturase 2 family. MatK subfamily.

The protein resides in the plastid. Its subcellular location is the chloroplast. Usually encoded in the trnK tRNA gene intron. Probably assists in splicing its own and other chloroplast group II introns. In Keckiella cordifolia (Heart-leafed penstemon), this protein is Maturase K.